The sequence spans 399 residues: Dual-specificity RNA methyltransferase RlmN (399 aa).

The active-site Proton acceptor is the Glu-120. The Radical SAM core domain maps to 126-367 (EEGRGTLCVS…SPVRTPRGRD (242 aa)). Cys-133 and Cys-372 are joined by a disulfide. Residues Cys-140, Cys-144, and Cys-147 each coordinate [4Fe-4S] cluster. S-adenosyl-L-methionine contacts are provided by residues 198 to 199 (GE), Ser-230, 252 to 254 (SLH), and Asn-329. Cys-372 serves as the catalytic S-methylcysteine intermediate.

The protein belongs to the radical SAM superfamily. RlmN family. [4Fe-4S] cluster serves as cofactor.

The protein localises to the cytoplasm. The catalysed reaction is adenosine(2503) in 23S rRNA + 2 reduced [2Fe-2S]-[ferredoxin] + 2 S-adenosyl-L-methionine = 2-methyladenosine(2503) in 23S rRNA + 5'-deoxyadenosine + L-methionine + 2 oxidized [2Fe-2S]-[ferredoxin] + S-adenosyl-L-homocysteine. The enzyme catalyses adenosine(37) in tRNA + 2 reduced [2Fe-2S]-[ferredoxin] + 2 S-adenosyl-L-methionine = 2-methyladenosine(37) in tRNA + 5'-deoxyadenosine + L-methionine + 2 oxidized [2Fe-2S]-[ferredoxin] + S-adenosyl-L-homocysteine. Specifically methylates position 2 of adenine 2503 in 23S rRNA and position 2 of adenine 37 in tRNAs. m2A2503 modification seems to play a crucial role in the proofreading step occurring at the peptidyl transferase center and thus would serve to optimize ribosomal fidelity. The sequence is that of Dual-specificity RNA methyltransferase RlmN from Parvibaculum lavamentivorans (strain DS-1 / DSM 13023 / NCIMB 13966).